Reading from the N-terminus, the 325-residue chain is uncharacterized protein (325 aa).

A helical membrane pass occupies residues 67–87 (WIPFFLLFSSVVVLGGLWWLG).

The protein localises to the membrane. This is an uncharacterized protein from Synechocystis sp. (strain ATCC 27184 / PCC 6803 / Kazusa).